The following is a 329-amino-acid chain: MYRFHTKRVRAAAGQVWTANLHKIRRSLKNVYQKCTTHHSYSTSYPTRASYGCDGDTLSLNEDMNLPAMLQDIKTGQTELLNQMTNIVSSISNIQEKINHYQNQMEALEARINISEDRQTATTKDMLSMKEDINTLKKKVTELESQNSYSSIHCLEVLEGQRGKEFVQLLHKLLQTETPKGTATSPDTVISSAEPERVSSYPEPTGELKKKTTSPQNITLKKNNSLQNASVGCKKVRSNIYIYPDFSTWIKLTFVHGGNWRFFLSATKLEEFIQWLLSRSTILPEEPQIIPQRDYAFTGAIGRLATICLSLFHYVYCLFGSSKEEITRL.

Residues 86–149 (NIVSSISNIQ…VTELESQNSY (64 aa)) are a coiled coil. The span at 178-191 (TPKGTATSPDTVIS) shows a compositional bias: polar residues. The segment at 178–214 (TPKGTATSPDTVISSAEPERVSSYPEPTGELKKKTTS) is disordered. Thr-182 carries the phosphothreonine modification.

In Mus musculus (Mouse), this protein is Coiled-coil domain-containing protein 54 (Ccdc54).